The sequence spans 394 residues: Protein TsgA homolog (394 aa).

The next 12 helical transmembrane spans lie at 11–31, 51–71, 76–96, 101–121, 134–154, 162–182, 206–226, 246–266, 274–294, 302–322, 334–354, and 363–383; these read WISY…GMVM, FLNA…EIIP, LVFG…GHNL, ISMF…TFLI, LLFT…AAAI, WYWV…LTLC, MGVL…LGFI, QLVS…SFIL, IVTV…STNN, ILAL…LGSL, FILT…GPIV, and LATA…LGFF.

Belongs to the major facilitator superfamily. TsgA family.

The protein localises to the cell inner membrane. In Yersinia enterocolitica serotype O:8 / biotype 1B (strain NCTC 13174 / 8081), this protein is Protein TsgA homolog.